A 149-amino-acid chain; its full sequence is Large ribosomal subunit protein eL8 (149 aa).

Belongs to the eukaryotic ribosomal protein eL8 family. As to quaternary structure, part of the 50S ribosomal subunit. Probably part of the RNase P complex.

The protein localises to the cytoplasm. Its function is as follows. Multifunctional RNA-binding protein that recognizes the K-turn motif in ribosomal RNA, the RNA component of RNase P, box H/ACA, box C/D and box C'/D' sRNAs. The chain is Large ribosomal subunit protein eL8 from Pyrobaculum calidifontis (strain DSM 21063 / JCM 11548 / VA1).